Here is a 351-residue protein sequence, read N- to C-terminus: C-X-C chemokine receptor type 1 (351 aa).

The Extracellular segment spans residues 1-44 (MAEAEYFIWTNPEGDFEKEFGNITGMLPTGDYFIPCKRVPITNR). Asn-22 carries N-linked (GlcNAc...) asparagine glycosylation. A helical transmembrane segment spans residues 45-71 (QALVVFYALVSLLSLLGNSLVMLVILY). At 72–80 (RRRTRSVMD) the chain is on the cytoplasmic side. A helical membrane pass occupies residues 81 to 101 (VYVLNLAIADLLFSLTLPFLA). Residues 102-116 (VSKLKGWIFGTPLCK) lie on the Extracellular side of the membrane. Cys-115 and Cys-192 are oxidised to a cystine. The chain crosses the membrane as a helical span at residues 117–138 (MVSLLKEFNFFSGILLLACISV). Over 139–159 (DRYLAIVHATRTLARKRYLVK) the chain is Cytoplasmic. A helical membrane pass occupies residues 160 to 179 (FVCVGIWGLSLILSLPFAIF). At 180-204 (RQAYKPFRSGTVCYEVLGEATTDFR) the chain is on the extracellular side. The helical transmembrane segment at 205–225 (MTLRGLSHIFGFLLPLLTMLV) threads the bilayer. Topologically, residues 226–247 (CYGLTLRMLFKTHMRQKHRAMG) are cytoplasmic. The helical transmembrane segment at 248 to 269 (VIFAVVLVFLLCCLPYNLVLLS) threads the bilayer. The Extracellular portion of the chain corresponds to 270 to 290 (DTLLGAHLIEDTCERRNDIDQ). A helical transmembrane segment spans residues 291 to 313 (ALYITEILGFSHSCLNPIIYAFV). Topologically, residues 314-351 (GQNFRHEFLKILANHGLVRKEVLTHRRVAFHTSLTAIY) are cytoplasmic.

This sequence belongs to the G-protein coupled receptor 1 family. In terms of assembly, interacts with IL8. Interacts with GNAI2.

The protein resides in the cell membrane. Receptor to interleukin-8, which is a powerful neutrophils chemotactic factor. Binding of IL-8 to the receptor causes activation of neutrophils. This response is mediated via a G-protein that activates a phosphatidylinositol-calcium second messenger system. This Mus musculus (Mouse) protein is C-X-C chemokine receptor type 1 (Cxcr1).